The chain runs to 367 residues: MLYYLLKYINEVFDPPGLGVIEYLTFRASAAAITALLITLVAGPGFIALLRARFIEPVKEEAPPEHRKKKLPTMGGLLIIISVEVSVLLWAKFTDPHVWLIMLALLWMGVIGFIDDYSKVVLKVKGGLSARWKLVGQISLGLVVGIYTSMDPVFSVLMRETTVPFFKNLTIDYGIFYVPVVIFIITALSNAVNLTDGLDGLAAGSSAIVIFGLGGFAYLAGNVVYASYLSIPFIPGGGEIAVVCMAATMACVGFLWFNANPAEIIMGDTGSLALGSTIAVTALLIKQELLLPVLGGLFFLETLSVSLQVLYFKYTRMRFGEGRRIFLMAPLHHHFQLKGWAEQKIVIRFWIVTILLFLTSLMTLKLR.

10 helical membrane-spanning segments follow: residues Ala30–Leu50, Leu71–Ala91, Thr94–Ile114, Ile138–Met158, Leu169–Ser189, Gly200–Ala220, Gly237–Phe257, Ile264–Leu284, Leu289–Val309, and Lys344–Leu364.

The protein belongs to the glycosyltransferase 4 family. MraY subfamily. Requires Mg(2+) as cofactor.

The protein resides in the cell inner membrane. It carries out the reaction UDP-N-acetyl-alpha-D-muramoyl-L-alanyl-gamma-D-glutamyl-meso-2,6-diaminopimeloyl-D-alanyl-D-alanine + di-trans,octa-cis-undecaprenyl phosphate = di-trans,octa-cis-undecaprenyl diphospho-N-acetyl-alpha-D-muramoyl-L-alanyl-D-glutamyl-meso-2,6-diaminopimeloyl-D-alanyl-D-alanine + UMP. The protein operates within cell wall biogenesis; peptidoglycan biosynthesis. Catalyzes the initial step of the lipid cycle reactions in the biosynthesis of the cell wall peptidoglycan: transfers peptidoglycan precursor phospho-MurNAc-pentapeptide from UDP-MurNAc-pentapeptide onto the lipid carrier undecaprenyl phosphate, yielding undecaprenyl-pyrophosphoryl-MurNAc-pentapeptide, known as lipid I. This is Phospho-N-acetylmuramoyl-pentapeptide-transferase from Chlorobium phaeovibrioides (strain DSM 265 / 1930) (Prosthecochloris vibrioformis (strain DSM 265)).